The sequence spans 334 residues: Inositol 2-dehydrogenase (334 aa).

Belongs to the Gfo/Idh/MocA family. As to quaternary structure, homotetramer.

It carries out the reaction myo-inositol + NAD(+) = scyllo-inosose + NADH + H(+). Its function is as follows. Involved in the oxidation of myo-inositol (MI) to 2-keto-myo-inositol (2KMI or 2-inosose). In Cereibacter sphaeroides (strain ATCC 17023 / DSM 158 / JCM 6121 / CCUG 31486 / LMG 2827 / NBRC 12203 / NCIMB 8253 / ATH 2.4.1.) (Rhodobacter sphaeroides), this protein is Inositol 2-dehydrogenase.